The following is a 225-amino-acid chain: Adenylate kinase (225 aa).

Residue Gly10–Thr15 participates in ATP binding. The NMP stretch occupies residues Glu30–Val59. AMP is bound by residues Ser31, Arg36, Asp57 to Val59, Gly85 to Arg88, and Gln92. The tract at residues Gly126–Asp165 is LID. An ATP-binding site is contributed by Arg127. AMP is bound by residues Arg162 and Arg174. Pro211 is an ATP binding site.

This sequence belongs to the adenylate kinase family. In terms of assembly, monomer.

It localises to the cytoplasm. The enzyme catalyses AMP + ATP = 2 ADP. Its pathway is purine metabolism; AMP biosynthesis via salvage pathway; AMP from ADP: step 1/1. Its function is as follows. Catalyzes the reversible transfer of the terminal phosphate group between ATP and AMP. Plays an important role in cellular energy homeostasis and in adenine nucleotide metabolism. In Desulfatibacillum aliphaticivorans, this protein is Adenylate kinase.